The primary structure comprises 308 residues: 1D-myo-inositol 2-acetamido-2-deoxy-alpha-D-glucopyranoside deacetylase (308 aa).

Zn(2+) contacts are provided by histidine 37, aspartate 40, and histidine 171.

Belongs to the MshB deacetylase family. The cofactor is Zn(2+).

The enzyme catalyses 1D-myo-inositol 2-acetamido-2-deoxy-alpha-D-glucopyranoside + H2O = 1D-myo-inositol 2-amino-2-deoxy-alpha-D-glucopyranoside + acetate. In terms of biological role, catalyzes the deacetylation of 1D-myo-inositol 2-acetamido-2-deoxy-alpha-D-glucopyranoside (GlcNAc-Ins) in the mycothiol biosynthesis pathway. This is 1D-myo-inositol 2-acetamido-2-deoxy-alpha-D-glucopyranoside deacetylase from Mycobacterium sp. (strain JLS).